Consider the following 85-residue polypeptide: Large ribosomal subunit protein bL27 (85 aa).

A disordered region spans residues 1–22 (MAHKKAAGSTRNGRDSESKRLG).

The protein belongs to the bacterial ribosomal protein bL27 family.

The sequence is that of Large ribosomal subunit protein bL27 from Pseudoalteromonas translucida (strain TAC 125).